Consider the following 431-residue polypeptide: Enolase (431 aa).

(2R)-2-phosphoglycerate is bound at residue Gln168. Catalysis depends on Glu210, which acts as the Proton donor. 3 residues coordinate Mg(2+): Asp247, Glu291, and Asp318. Positions 343, 372, 373, and 394 each coordinate (2R)-2-phosphoglycerate. Lys343 serves as the catalytic Proton acceptor.

Belongs to the enolase family. Component of the RNA degradosome, a multiprotein complex involved in RNA processing and mRNA degradation. The cofactor is Mg(2+).

The protein localises to the cytoplasm. It is found in the secreted. Its subcellular location is the cell surface. It carries out the reaction (2R)-2-phosphoglycerate = phosphoenolpyruvate + H2O. The protein operates within carbohydrate degradation; glycolysis; pyruvate from D-glyceraldehyde 3-phosphate: step 4/5. In terms of biological role, catalyzes the reversible conversion of 2-phosphoglycerate (2-PG) into phosphoenolpyruvate (PEP). It is essential for the degradation of carbohydrates via glycolysis. This is Enolase from Acinetobacter baumannii (strain SDF).